A 193-amino-acid polypeptide reads, in one-letter code: MLSQLPRAAIRLLPRRQPNLHCYRYHSKPTSLTAQAGRVHRVLSAKADSNLTYDDLATCLGVTNTYAAQLLLGQAKLTPETAKKLRAALPAVSDDDLEDMQNSFPMRSYDDEILKEPHVYRTYEAITHYGEAMKAIINEQCGDGIMSAIDFYCDVGTSIGKHGEKRVVITFNGKFLPFIEQKAEDNGAMSPRD.

Active-site residues include arginine 121, glutamate 124, and serine 147.

It belongs to the cyanase family.

The catalysed reaction is cyanate + hydrogencarbonate + 3 H(+) = NH4(+) + 2 CO2. Catalyzes the reaction of cyanate with bicarbonate to produce ammonia and carbon dioxide. The protein is Cyanate hydratase of Phaeodactylum tricornutum (strain CCAP 1055/1).